The primary structure comprises 274 residues: Acetyl-coenzyme A carboxylase carboxyl transferase subunit alpha (274 aa).

The CoA carboxyltransferase C-terminal domain maps to 1-245 (MENSQELTPW…RENLKKAIEG (245 aa)).

This sequence belongs to the AccA family. In terms of assembly, acetyl-CoA carboxylase is a heterohexamer composed of biotin carboxyl carrier protein (AccB), biotin carboxylase (AccC) and two subunits each of ACCase subunit alpha (AccA) and ACCase subunit beta (AccD).

It localises to the cytoplasm. The enzyme catalyses N(6)-carboxybiotinyl-L-lysyl-[protein] + acetyl-CoA = N(6)-biotinyl-L-lysyl-[protein] + malonyl-CoA. Its pathway is lipid metabolism; malonyl-CoA biosynthesis; malonyl-CoA from acetyl-CoA: step 1/1. In terms of biological role, component of the acetyl coenzyme A carboxylase (ACC) complex. First, biotin carboxylase catalyzes the carboxylation of biotin on its carrier protein (BCCP) and then the CO(2) group is transferred by the carboxyltransferase to acetyl-CoA to form malonyl-CoA. The chain is Acetyl-coenzyme A carboxylase carboxyl transferase subunit alpha from Clostridium acetobutylicum (strain ATCC 824 / DSM 792 / JCM 1419 / IAM 19013 / LMG 5710 / NBRC 13948 / NRRL B-527 / VKM B-1787 / 2291 / W).